A 1019-amino-acid chain; its full sequence is Limulus clotting factor C (1019 aa).

The first 25 residues, 1–25 (MVLASFLVSGLVLGLLAQKMRPVQS), serve as a signal peptide directing secretion. The 36-residue stretch at 102–137 (YGTWCSGECQCKNGGICDQRTGACACRDRYEGVHCE) folds into the EGF-like domain. 17 cysteine pairs are disulfide-bonded: cysteine 106/cysteine 118, cysteine 112/cysteine 125, cysteine 127/cysteine 136, cysteine 142/cysteine 182, cysteine 168/cysteine 195, cysteine 199/cysteine 241, cysteine 227/cysteine 254, cysteine 260/cysteine 308, cysteine 294/cysteine 321, cysteine 331/cysteine 350, cysteine 354/cysteine 374, cysteine 436/cysteine 447, cysteine 464/cysteine 564, cysteine 538/cysteine 556, cysteine 576/cysteine 621, cysteine 607/cysteine 634, and cysteine 720/cysteine 748. 3 consecutive Sushi domains span residues 140-197 (KGCP…KCIR), 198-256 (ECAM…QCKN), and 258-323 (VFCP…SCVK). In terms of domain architecture, LCCL spans 325-421 (ADREVDCDSK…EELKSLARSF (97 aa)). In terms of domain architecture, C-type lectin spans 436–568 (CPDGWFEVDE…PSSFACMMDL (133 aa)). 2 N-linked (GlcNAc...) asparagine glycosylation sites follow: asparagine 523 and asparagine 534. Sushi domains are found at residues 574–636 (AKCD…RCIK) and 689–750 (PRSS…SCIP). N-linked (GlcNAc...) asparagine glycans are attached at residues asparagine 624, asparagine 740, and asparagine 767. A Peptidase S1 domain is found at 763–1019 (IWNGNSTEIG…VFLSWIRQFI (257 aa)). The cysteines at positions 794 and 810 are disulfide-linked. Active-site charge relay system residues include histidine 809 and aspartate 865. Asparagine 912 is a glycosylation site (N-linked (GlcNAc...) asparagine). A disulfide bond links cysteine 932 and cysteine 951. Aspartate 960 serves as a coordination point for substrate. The cysteines at positions 962 and 996 are disulfide-linked. Serine 966 serves as the catalytic Charge relay system.

The protein belongs to the peptidase S1 family. As to quaternary structure, heterodimer of a light chain and a heavy chain linked by a disulfide bond.

Its subcellular location is the secreted. It carries out the reaction Selective cleavage of 103-Arg-|-Ser-104 and 124-Ile-|-Ile-125 bonds in Limulus clotting factor B to form activated factor B. Cleavage of -Pro-Arg-|-Xaa- bonds in synthetic substrates.. With respect to regulation, activated by Gram-negative bacterial lipopolysaccharides and chymotrypsin. In terms of biological role, this enzyme is closely associated with an endotoxin-sensitive hemolymph coagulation system which may play important roles in both hemostasis and host defense mechanisms. Its active form catalyzes the activation of factor B. This chain is Limulus clotting factor C, found in Carcinoscorpius rotundicauda (Mangrove horseshoe crab).